A 259-amino-acid chain; its full sequence is Succinate dehydrogenase iron-sulfur subunit (259 aa).

The 2Fe-2S ferredoxin-type domain maps to 28–119; the sequence is RRFNIYRWDP…DVNIYPLPHM (92 aa). Residues cysteine 80, cysteine 85, and cysteine 100 each coordinate [2Fe-2S] cluster. The 4Fe-4S ferredoxin-type domain maps to 160–190; the sequence is DRKKLDGLYECVMCASCSTACPSYWWNGDRY. 3 residues coordinate [4Fe-4S] cluster: cysteine 170, cysteine 173, and cysteine 176. Cysteine 180 contacts [3Fe-4S] cluster. Tryptophan 185 is an a ubiquinone binding site. The [3Fe-4S] cluster site is built by cysteine 227 and cysteine 233. Cysteine 237 is a [4Fe-4S] cluster binding site.

It belongs to the succinate dehydrogenase/fumarate reductase iron-sulfur protein family. In terms of assembly, part of an enzyme complex containing four subunits: a flavoprotein, an iron-sulfur, cytochrome b-556, and a hydrophobic anchor protein. [2Fe-2S] cluster serves as cofactor. Requires [3Fe-4S] cluster as cofactor. It depends on [4Fe-4S] cluster as a cofactor.

The catalysed reaction is a quinone + succinate = fumarate + a quinol. The protein operates within carbohydrate metabolism; tricarboxylic acid cycle; fumarate from succinate (bacterial route): step 1/1. This Paracoccus denitrificans protein is Succinate dehydrogenase iron-sulfur subunit (sdhB).